Reading from the N-terminus, the 265-residue chain is Signal peptidase I (265 aa).

The Cytoplasmic segment spans residues 1–19 (MQIDTKTNTNKTTAQEWKS). The chain crosses the membrane as a helical span at residues 20–40 (FAFVVCIALLIRILIMEPFTV). The Periplasmic portion of the chain corresponds to 41-265 (PTGSMKATIL…IFRNLYNTDE (225 aa)). Active-site residues include Ser-44 and Lys-107.

Belongs to the peptidase S26 family.

The protein resides in the cell inner membrane. The catalysed reaction is Cleavage of hydrophobic, N-terminal signal or leader sequences from secreted and periplasmic proteins.. The polypeptide is Signal peptidase I (lepB) (Rickettsia canadensis (strain McKiel)).